Here is a 241-residue protein sequence, read N- to C-terminus: C-type lectin domain family 9 member A (241 aa).

The Cytoplasmic segment spans residues 1–34 (MHEEEIYTSLQWDIPTSEASQKCPSLSKCPGTWC). The short motif at 5–10 (EIYTSL) is the ITAM-like element. The helical; Signal-anchor for type II membrane protein transmembrane segment at 35-55 (IVTVISCVVCVGLLAASIFLG) threads the bilayer. Residues 56–241 (IKFSQVSSLV…CEKKAFGSCI (186 aa)) are Extracellular-facing. 2 N-linked (GlcNAc...) asparagine glycosylation sites follow: Asn81 and Asn88. An intrachain disulfide couples Cys113 to Cys124. The C-type lectin domain occupies 120-233 (NGKSCYYAFD…CSNWKYFICE (114 aa)). 3 N-linked (GlcNAc...) asparagine glycosylation sites follow: Asn135, Asn161, and Asn223. Cystine bridges form between Cys141-Cys232 and Cys211-Cys224.

Homodimer. N-glycosylated. In terms of tissue distribution, high expression in the spleen, moderate to low levels in several other tissues and cell types, but no detectable expression in skin dendritic cells or CD4(+) T-cells.

Its subcellular location is the membrane. Its function is as follows. Functions as an endocytic receptor on a small subset of myeloid cells specialized for the uptake and processing of material from dead cells. Recognizes filamentous form of actin in association with particular actin-binding domains of cytoskeletal proteins, including spectrin, exposed when cell membranes are damaged, and mediate the cross-presentation of dead-cell associated antigens in a Syk-dependent manner. The protein is C-type lectin domain family 9 member A (Clec9a) of Rattus norvegicus (Rat).